A 194-amino-acid chain; its full sequence is Factor in the germline alpha (194 aa).

The bHLH domain occupies 59–111; it reads ERRRVANAKERERIKNLNRGFAKLKALVPFLPQSRKPSKVDILKGATEYIQIL. Basic and acidic residues predominate over residues 121–137; it reads SEKQSPEEQTHSGRPSD. A disordered region spans residues 121–163; that stretch reads SEKQSPEEQTHSGRPSDPHVSSTRELLGNATQPTSCASGLKKE. A compositionally biased stretch (polar residues) spans 139-157; sequence HVSSTRELLGNATQPTSCA.

Heterodimer with TCF3/isoform E12. In terms of tissue distribution, expressed only in the oocytes within the ovary and at lower level in the testis. Found in the resting oocytes of the primordial follicle cells, at the periphery of the ovary and in the hilar region. Also detected in growing oocytes, but at lower levels.

It is found in the nucleus. Functionally, germ-line specific transcription factor implicated in postnatal oocyte-specific gene expression. Plays a key regulatory role in the expression of multiple oocyte-specific genes, including those that initiate folliculogenesis and those that encode the zona pellucida (ZP1, ZP2 and ZP3) required for fertilization and early embryonic survival. Essential for oocytes to survive and form primordial follicles. The persistence of FIGLA in adult females suggests that it may regulate additional pathways that are essential for normal ovarian development. Binds to the E-box (5'-CANNTG-3') of the ZPs (ZP1, ZP2, ZP3) promoters. In Mus musculus (Mouse), this protein is Factor in the germline alpha (Figla).